Consider the following 432-residue polypeptide: Glutamate-1-semialdehyde 2,1-aminomutase (432 aa).

An N6-(pyridoxal phosphate)lysine modification is found at Lys-271.

Belongs to the class-III pyridoxal-phosphate-dependent aminotransferase family. HemL subfamily. Homodimer. Pyridoxal 5'-phosphate is required as a cofactor.

Its subcellular location is the cytoplasm. It catalyses the reaction (S)-4-amino-5-oxopentanoate = 5-aminolevulinate. It participates in porphyrin-containing compound metabolism; protoporphyrin-IX biosynthesis; 5-aminolevulinate from L-glutamyl-tRNA(Glu): step 2/2. This Protochlamydia amoebophila (strain UWE25) protein is Glutamate-1-semialdehyde 2,1-aminomutase.